Reading from the N-terminus, the 346-residue chain is Transposase for insertion sequence element IS1533 (346 aa).

Belongs to the transposase IS1111A/IS1328/IS1533 family.

In terms of biological role, required for the transposition of the insertion element. This Leptospira borgpetersenii protein is Transposase for insertion sequence element IS1533 (tnhA).